Here is a 236-residue protein sequence, read N- to C-terminus: tRNA1(Val) (adenine(37)-N6)-methyltransferase (236 aa).

The protein belongs to the methyltransferase superfamily. tRNA (adenine-N(6)-)-methyltransferase family.

The protein localises to the cytoplasm. It catalyses the reaction adenosine(37) in tRNA1(Val) + S-adenosyl-L-methionine = N(6)-methyladenosine(37) in tRNA1(Val) + S-adenosyl-L-homocysteine + H(+). Its function is as follows. Specifically methylates the adenine in position 37 of tRNA(1)(Val) (anticodon cmo5UAC). The polypeptide is tRNA1(Val) (adenine(37)-N6)-methyltransferase (Actinobacillus pleuropneumoniae serotype 7 (strain AP76)).